Here is a 135-residue protein sequence, read N- to C-terminus: Small ribosomal subunit protein bS6 (135 aa).

A disordered region spans residues glutamate 99–glutamate 135.

This sequence belongs to the bacterial ribosomal protein bS6 family.

Its function is as follows. Binds together with bS18 to 16S ribosomal RNA. This is Small ribosomal subunit protein bS6 from Bartonella tribocorum (strain CIP 105476 / IBS 506).